The sequence spans 256 residues: Thioredoxin-dependent peroxide reductase, mitochondrial (256 aa).

A mitochondrion-targeting transit peptide spans 1–61; that stretch reads MAAAVGRLLR…KLFSTSSSCH (61 aa). The Thioredoxin domain occupies 63-221; that stretch reads PAVTQHAPYF…TLRLVKAFQY (159 aa). Lys83 carries the N6-succinyllysine modification. Lys91 carries the post-translational modification N6-acetyllysine; alternate. Lys91 carries the post-translational modification N6-succinyllysine; alternate. Catalysis depends on Cys108, which acts as the Cysteine sulfenic acid (-SOH) intermediate. Thr146 carries the phosphothreonine modification.

The protein belongs to the peroxiredoxin family. AhpC/Prx1 subfamily. As to quaternary structure, homodimer; disulfide-linked, upon oxidation. 6 homodimers assemble to form a ring-like dodecamer. Interacts with NEK6. Interacts with LRRK2. Interacts with MAP3K13. Interacts with RPS6KC1 (via PX domain). Phosphorylated by LRRK2; phosphorylation reduces perodixase activity. In terms of processing, the enzyme can be inactivated by further oxidation of the cysteine sulfenic acid (C(P)-SOH) to sulphinic acid (C(P)-SO2H) and sulphonic acid (C(P)-SO3H) instead of its condensation to a disulfide bond. Post-translationally, S-palmitoylated.

Its subcellular location is the mitochondrion. It is found in the cytoplasm. It localises to the early endosome. It catalyses the reaction a hydroperoxide + [thioredoxin]-dithiol = an alcohol + [thioredoxin]-disulfide + H2O. Its function is as follows. Thiol-specific peroxidase that catalyzes the reduction of hydrogen peroxide and organic hydroperoxides to water and alcohols, respectively. Plays a role in cell protection against oxidative stress by detoxifying peroxides. Acts synergistically with MAP3K13 to regulate the activation of NF-kappa-B in the cytosol. Required for the maintenance of physical strength. This is Thioredoxin-dependent peroxide reductase, mitochondrial (PRDX3) from Homo sapiens (Human).